Consider the following 172-residue polypeptide: Endoribonuclease YbeY (172 aa).

The disordered stretch occupies residues 1–21 (MTLHVGAEPAPREDDTEDALR). Basic and acidic residues predominate over residues 10-21 (APREDDTEDALR). The Zn(2+) site is built by H134, H138, and H144.

It belongs to the endoribonuclease YbeY family. Zn(2+) serves as cofactor.

The protein localises to the cytoplasm. Its function is as follows. Single strand-specific metallo-endoribonuclease involved in late-stage 70S ribosome quality control and in maturation of the 3' terminus of the 16S rRNA. The sequence is that of Endoribonuclease YbeY from Burkholderia lata (strain ATCC 17760 / DSM 23089 / LMG 22485 / NCIMB 9086 / R18194 / 383).